Consider the following 293-residue polypeptide: Putative metal ABC transporter substrate-binding protein Hpf (293 aa).

A signal peptide spans 1-22; sequence MRNSFKIMTALALGLFAMQANA. Residues 23 to 48 form an interaction with host components region; that stretch reads KFKVVTTFTVIQDIAQNVAGNAATVE. Positions 58, 123, 189, and 264 each coordinate a divalent metal cation.

This sequence belongs to the bacterial solute-binding protein 9 family. As to quaternary structure, interacts with host laminin and vitronectin. Can interact with both immobilized and soluble vitronectin.

It is found in the cell outer membrane. The protein resides in the cell surface. Its subcellular location is the periplasm. In terms of biological role, part of an ATP-binding cassette (ABC) transport system involved in metal import. Binds a metal with high affinity and specificity and delivers it to the membrane permease for translocation into the cytoplasm. Acts as an adhesin that promotes binding of H.influenzae to host laminin and vitronectin. In addition, interaction with serum vitronectin plays an important role in bacterial serum resistance. The sequence is that of Putative metal ABC transporter substrate-binding protein Hpf (hpf) from Haemophilus influenzae (strain NTHi 3655).